The sequence spans 512 residues: MVSLKACVVAYGFTLLPALVSGSPLVPRYFQKHLVSRCNISAITVQSELGPQLSNTSLIFGPDNVLFPNATERWNTLDTPDVQLVVQPAAESDISKIVKYCNDNSIEFLVRNRGHGTTTSLSAFSGIEINVELLQGITIQPDGETAIFQAGTYGAEVINTLWDQGYVTTTGSTACVGLTGPSLGGGHSRYEGLYGLVMDNIVHYNIVLANGTEIGVNETSHPDLMWALKGAGHNFAIVTSLEKKIYPGENWHQHTYTWTQDKLETVFEALNTFHKSYNGTTPPKMGVNYGAIIMNTSYSTTEAVMEWGFQYAGPGDEAEALLAPFNAIGAIAEDQFDASYPTIAGTTSETCGSAKRAISSAMTLDYNITTERALYDHFVAKVAEYPDLAATAYLWHEGYSTEGYQIIPEDSTAYPHREENHLMVFFTEVPEDSDLLEPALDWAKEAMDLWNGGQPDRLPSTYVNYAQGADYETLESVYGYESWRLERLRSLKAEYDPENRFRYFVPIISDEA.

The signal sequence occupies residues 1-22; the sequence is MVSLKACVVAYGFTLLPALVSG. N-linked (GlcNAc...) asparagine glycosylation is found at Asn39, Asn55, Asn69, Asn210, Asn217, Asn278, Asn295, and Asn367. Residues 77–248 form the FAD-binding PCMH-type domain; sequence LDTPDVQLVV…TSLEKKIYPG (172 aa).

This sequence belongs to the oxygen-dependent FAD-linked oxidoreductase family. The cofactor is FAD.

It participates in secondary metabolite biosynthesis. Its function is as follows. FAD-linked oxidoreductase; part of the gene cluster that mediates the biosynthesis of iso-A82775C, a enylepoxycyclohexane and biosynthetic precursor of the chloropestolide anticancer natural products. Within the cluster, the prenyltransferase iacE prenylates siccayne to generate pestalodiol E, using dimethylallyl diphosphate (DMAPP) as cosubstrate. The probable oxidoreductase iacF is then involved in the epoxidation of pestalodiol F to pestalodiol F, which is further converted to pestalofone A by the short-chain dehydrogenase/reductase iacG. Iso-A82775C is subsequently generated from pestalofone A by the short-chain dehydrogenase/reductase iacC. Iso-A82775C is further condensed with maldoxin via a Diels-Alder reaction to produce the anticancer natural products chloropestolides A to E. The chain is FAD-linked oxidoreductase iacH from Pestalotiopsis fici (strain W106-1 / CGMCC3.15140).